The chain runs to 1247 residues: Protein jagged-2 (1247 aa).

Residues 1–23 form the signal peptide; that stretch reads MRARGWGRLPRRLLLLLVLCVQA. The Extracellular segment spans residues 24–1082; that stretch reads TRPMGYFELQ…ETVVMGGSST (1059 aa). N-linked (GlcNAc...) asparagine glycosylation occurs at N153. The DSL domain maps to 196–240; the sequence is VRCDENYYSATCNKFCRPRNDFFGHYTCDQYGNKACMDGWMGKEC. Intrachain disulfides connect C198/C207, C211/C223, C231/C240, C245/C256, C249/C262, C264/C273, C276/C287, C282/C293, C295/C304, C311/C323, C317/C333, C335/C344, C351/C362, C356/C371, C373/C382, C389/C400, C394/C409, C411/C420, C427/C438, C432/C447, C449/C458, C465/C475, C469/C484, C486/C495, C502/C513, C507/C522, C524/C533, C540/C551, C545/C560, C562/C571, C589/C612, C606/C622, C624/C633, C640/C651, C645/C660, C662/C671, C678/C689, C683/C698, C700/C709, C716/C727, C721/C736, and C738/C747. Residues 241 to 274 form the EGF-like 1 domain; the sequence is KEAVCKQGCNLLHGGCTVPGECRCSYGWQGKFCD. The region spanning 275–305 is the EGF-like 2; atypical domain; that stretch reads ECVPYPGCVHGSCVEPWHCDCETNWGGLLCD. EGF-like domains follow at residues 307–345 and 347–383; these read DLNY…KNCE and AEHA…PTCA. The EGF-like 5; calcium-binding domain occupies 385–421; sequence DIDECASNPCAAGGTCVDQVDGFECICPEQWVGATCQ. An EGF-like 6; calcium-binding domain is found at 423-459; the sequence is DANECEGKPCLNAFSCKNLIGGYYCDCLPGWKGINCQ. The region spanning 461–496 is the EGF-like 7; calcium-binding domain; the sequence is NINDCHGQCQHGGTCKDLVNGYQCVCPRGFGGRHCE. 2 consecutive EGF-like domains span residues 498–534 and 536–572; these read EYDK…LHCE and DMDL…KNCS. N570 is a glycosylation site (N-linked (GlcNAc...) asparagine). The EGF-like 10; atypical domain occupies 574-634; it reads PRDTCPGGAC…DSGFTGTYCH (61 aa). N619 carries an N-linked (GlcNAc...) asparagine glycan. Residues 636–672 enclose the EGF-like 11; calcium-binding domain; it reads NIDDCMGQPCRNGGTCIDEVDSFRCFCPSGWEGELCD. The EGF-like 12; calcium-binding domain maps to 674-710; the sequence is NPNDCLPDPCHSRGRCYDLVNDFYCACDDGWKGKTCH. 2 EGF-like domains span residues 712–748 and 751–787; these read REFQ…STCT and KNSS…RTCT. N-linked (GlcNAc...) asparagine glycosylation occurs at N752. 9 cysteine pairs are disulfide-bonded: C755–C766, C760–C775, C777–C786, C793–C804, C798–C813, C815–C824, C831–C842, C836–C851, and C853–C862. One can recognise an EGF-like 15; calcium-binding domain in the interval 789 to 825; it reads NTNDCNPLPCYNGGICVDGVNWFRCECAPGFAGPDCR. The region spanning 827–863 is the EGF-like 16; calcium-binding domain; sequence NIDECQSSPCAYGATCVDEINGYRCSCPPGRSGPRCQ. Residue N1060 is glycosylated (N-linked (GlcNAc...) asparagine). The chain crosses the membrane as a helical span at residues 1083–1103; the sequence is GLLVPVLCSVFSVLWLACVVI. Residues 1104 to 1247 are Cytoplasmic-facing; sequence CVWWTRKRRK…TKDVRRAGRE (144 aa). 3 stretches are compositionally biased toward basic and acidic residues: residues 1115–1125, 1192–1212, and 1230–1247; these read RERSRLPRDES, LSRG…KFTK, and VDNR…AGRE. Disordered stretches follow at residues 1115 to 1148 and 1167 to 1247; these read RERS…GSGL and PRRA…AGRE. Residue S1125 is modified to Phosphoserine.

In terms of tissue distribution, found to be highest in fetal thymus, epidermis, foregut dorsal root ganglia and inner ear. In 2-weeK-old mice, abundant in heart, lung, thymus, skeletal muscle, brain and testis. Expression overlaps partially with Notch1 expression.

It localises to the membrane. In terms of biological role, putative Notch ligand involved in the mediation of Notch signaling. Plays an essential role during limb, craniofacial and thymic development. May be involved in myogenesis and in the development of peripheral and central nervous systems. The protein is Protein jagged-2 (Jag2) of Mus musculus (Mouse).